Consider the following 447-residue polypeptide: Tubulin beta chain (447 aa).

Residues Gln-11, Glu-69, Ser-138, Gly-142, Thr-143, Gly-144, Asn-204, and Asn-226 each coordinate GTP. Glu-69 provides a ligand contact to Mg(2+). Residues 424–447 are disordered; sequence QYQEARSTDSDEYDNEEYYNQQEE. A compositionally biased stretch (acidic residues) spans 433-447; it reads SDEYDNEEYYNQQEE.

It belongs to the tubulin family. In terms of assembly, dimer of alpha and beta chains. A typical microtubule is a hollow water-filled tube with an outer diameter of 25 nm and an inner diameter of 15 nM. Alpha-beta heterodimers associate head-to-tail to form protofilaments running lengthwise along the microtubule wall with the beta-tubulin subunit facing the microtubule plus end conferring a structural polarity. Microtubules usually have 13 protofilaments but different protofilament numbers can be found in some organisms and specialized cells. Mg(2+) serves as cofactor. Lens specific.

It is found in the cytoplasm. The protein localises to the cytoskeleton. Its function is as follows. Tubulin is the major constituent of microtubules, a cylinder consisting of laterally associated linear protofilaments composed of alpha- and beta-tubulin heterodimers. Microtubules grow by the addition of GTP-tubulin dimers to the microtubule end, where a stabilizing cap forms. Below the cap, tubulin dimers are in GDP-bound state, owing to GTPase activity of alpha-tubulin. The sequence is that of Tubulin beta chain from Enteroctopus dofleini (North Pacific giant octopus).